The following is a 309-amino-acid chain: Ribonuclease Z (309 aa).

Zn(2+) contacts are provided by histidine 63, histidine 65, aspartate 67, histidine 68, histidine 145, aspartate 216, and histidine 274. Aspartate 67 (proton acceptor) is an active-site residue.

It belongs to the RNase Z family. Homodimer. Requires Zn(2+) as cofactor.

It carries out the reaction Endonucleolytic cleavage of RNA, removing extra 3' nucleotides from tRNA precursor, generating 3' termini of tRNAs. A 3'-hydroxy group is left at the tRNA terminus and a 5'-phosphoryl group is left at the trailer molecule.. Zinc phosphodiesterase, which displays some tRNA 3'-processing endonuclease activity. Probably involved in tRNA maturation, by removing a 3'-trailer from precursor tRNA. This is Ribonuclease Z from Streptococcus pneumoniae (strain 70585).